A 116-amino-acid polypeptide reads, in one-letter code: Nucleoid-associated protein P9301_00191 (116 aa).

Belongs to the YbaB/EbfC family. In terms of assembly, homodimer.

It is found in the cytoplasm. The protein localises to the nucleoid. Functionally, binds to DNA and alters its conformation. May be involved in regulation of gene expression, nucleoid organization and DNA protection. The polypeptide is Nucleoid-associated protein P9301_00191 (Prochlorococcus marinus (strain MIT 9301)).